Consider the following 67-residue polypeptide: Large ribosomal subunit protein bL35 (67 aa).

The interval 22 to 45 (GKIKRWKSGGAHYNTKKSSKRKRH) is disordered. Over residues 35-45 (NTKKSSKRKRH) the composition is skewed to basic residues.

It belongs to the bacterial ribosomal protein bL35 family.

The polypeptide is Large ribosomal subunit protein bL35 (Aquifex aeolicus (strain VF5)).